A 457-amino-acid polypeptide reads, in one-letter code: CUB1 family protein C30C2.08 (457 aa).

Coiled-coil stretches lie at residues 119–174 (TQND…NISK) and 418–448 (QELVNSLLTQCHQLIEELRDEKHQHDIEERE).

This sequence belongs to the CUB1 family.

Its subcellular location is the cytoplasm. The protein localises to the nucleus. Involved in bleomycin tolerance with links to DNA repair and/or proteasome function. The chain is CUB1 family protein C30C2.08 from Schizosaccharomyces pombe (strain 972 / ATCC 24843) (Fission yeast).